A 477-amino-acid polypeptide reads, in one-letter code: Zinc metalloproteinase/disintegrin (477 aa).

The first 19 residues, 1 to 19, serve as a signal peptide directing secretion; it reads MIQVLLVIICLAVPYQGSS. A propeptide spanning residues 20–186 is cleaved from the precursor; sequence IILESGNVND…PIKKASQSNL (167 aa). Positions 192 to 388 constitute a Peptidase M12B domain; the sequence is RYIELVIVAD…QKPQCILNKP (197 aa). Positions 195 and 279 each coordinate Ca(2+). Disulfide bonds link Cys-303-Cys-383, Cys-343-Cys-367, and Cys-345-Cys-350. Residue His-328 participates in Zn(2+) binding. The active site involves Glu-329. Zn(2+)-binding residues include His-332 and His-338. Ca(2+) contacts are provided by Cys-383 and Asn-386. Positions 389-404 are excised as a propeptide; that stretch reads LRTDTVSTPVSGNELL. The Disintegrin domain maps to 396 to 477; the sequence is TPVSGNELLE…AGCPRNPFHA (82 aa). 6 disulfides stabilise this stretch: Cys-410–Cys-425, Cys-412–Cys-420, Cys-419–Cys-442, Cys-433–Cys-439, Cys-438–Cys-463, and Cys-451–Cys-470. Positions 455-457 match the Cell attachment site motif; that stretch reads RGD.

The protein belongs to the venom metalloproteinase (M12B) family. P-II subfamily. P-IIa sub-subfamily. As to quaternary structure, monomer. It depends on Zn(2+) as a cofactor. Expressed by the venom gland.

The protein resides in the secreted. Functionally, impairs hemostasis in the envenomed animal. Its function is as follows. Inhibits platelet aggregation induced by ADP, thrombin, platelet-activating factor and collagen. Acts by inhibiting fibrinogen interaction with platelet receptors GPIIb/GPIIIa (ITGA2B/ITGB3). The protein is Zinc metalloproteinase/disintegrin of Gloydius halys (Chinese water mocassin).